A 178-amino-acid chain; its full sequence is Actin-related protein 2/3 complex subunit 3-A (178 aa).

Belongs to the ARPC3 family. In terms of assembly, component of the Arp2/3 complex composed of actr2/arp2, actr3/arp3, arpc1 (arpc1a or arpc1b), arpc2, arpc3, arpc4 and arpc5.

It localises to the cytoplasm. Its subcellular location is the cytoskeleton. It is found in the cell projection. The protein localises to the nucleus. In terms of biological role, component of the Arp2/3 complex, a multiprotein complex that mediates actin polymerization upon stimulation by nucleation-promoting factor (NPF). The Arp2/3 complex mediates the formation of branched actin networks in the cytoplasm, providing the force for cell motility. In addition to its role in the cytoplasmic cytoskeleton, the Arp2/3 complex also promotes actin polymerization in the nucleus, thereby regulating gene transcription and repair of damaged DNA. The Arp2/3 complex promotes homologous recombination (HR) repair in response to DNA damage by promoting nuclear actin polymerization, leading to drive motility of double-strand breaks (DSBs). In Xenopus laevis (African clawed frog), this protein is Actin-related protein 2/3 complex subunit 3-A (arpc3-a).